A 640-amino-acid chain; its full sequence is MAEAALVITPQIPMVTEEFVKPSQGHVTFEDIAVYFSQEEWGLLDEAQRCLYHDVMLENFSLMASVGCLHGIEAEEAPSEQTLSAQGVSQARTPKLGPSIPNAHSCEMCILVMKDILYLSEHQGTLPWQKPYTSVASGKWFSFGSNLQQHQNQDSGEKHIRKEESSALLLNSCKIPLSDNLFPCKDVEKDFPTILGLLQHQTTHSRQEYAHRSRETFQQRRYKCEQVFNEKVHVTEHQRVHTGEKAYKRREYGKSLNSKYLFVEHQRTHNAEKPYVCNICGKSFLHKQTLVGHQQRIHTRERSYVCIECGKSLSSKYSLVEHQRTHNGEKPYVCNVCGKSFRHKQTFVGHQQRIHTGERPYVCMECGKSFIHSYDRIRHQRVHTGEGAYQCSECGKSFIYKQSLLDHHRIHTGERPYECKECGKAFIHKKRLLEHQRIHTGEKPYVCIICGKSFIRSSDYMRHQRIHTGERAYECSDCGKAFISKQTLLKHHKIHTRERPYECSECGKGFYLEVKLLQHQRIHTREQLCECNECGKVFSHQKRLLEHQKVHTGEKPCECSECGKCFRHRTSLIQHQKVHSGERPYNCTACEKAFIYKNKLVEHQRIHTGEKPYECGKCGKAFNKRYSLVRHQKVHITEEP.

Residues 27-140 form the KRAB domain; that stretch reads VTFEDIAVYF…PYTSVASGKW (114 aa). The segment at 217–241 adopts a C2H2-type 1; degenerate zinc-finger fold; the sequence is FQQRRYKCEQVFNEKVHVTEHQRVH. K223 is covalently cross-linked (Glycyl lysine isopeptide (Lys-Gly) (interchain with G-Cter in SUMO2)). Residues 247 to 269 form a C2H2-type 2; degenerate zinc finger; that stretch reads YKRREYGKSLNSKYLFVEHQRTH. C2H2-type zinc fingers lie at residues 275 to 298, 304 to 326, 332 to 355, 361 to 383, 389 to 411, 417 to 439, 445 to 467, 473 to 495, 501 to 523, 529 to 551, 557 to 579, 585 to 607, and 613 to 635; these read YVCNICGKSFLHKQTLVGHQQRIH, YVCIECGKSLSSKYSLVEHQRTH, YVCNVCGKSFRHKQTFVGHQQRIH, YVCMECGKSFIHSYDRIRHQRVH, YQCSECGKSFIYKQSLLDHHRIH, YECKECGKAFIHKKRLLEHQRIH, YVCIICGKSFIRSSDYMRHQRIH, YECSDCGKAFISKQTLLKHHKIH, YECSECGKGFYLEVKLLQHQRIH, CECNECGKVFSHQKRLLEHQKVH, CECSECGKCFRHRTSLIQHQKVH, YNCTACEKAFIYKNKLVEHQRIH, and YECGKCGKAFNKRYSLVRHQKVH.

It belongs to the krueppel C2H2-type zinc-finger protein family.

It localises to the nucleus. Its function is as follows. May be involved in transcriptional regulation. In Homo sapiens (Human), this protein is Zinc finger protein 549 (ZNF549).